We begin with the raw amino-acid sequence, 208 residues long: Ubiquinone biosynthesis protein COQ4 homolog, mitochondrial (208 aa).

Positions 105, 106, 109, and 122 each coordinate Zn(2+).

Belongs to the COQ4 family. Component of a multi-subunit COQ enzyme complex. The cofactor is Zn(2+).

Its subcellular location is the mitochondrion inner membrane. It catalyses the reaction a 4-hydroxy-3-methoxy-5-(all-trans-polyprenyl)benzoate + H(+) = a 2-methoxy-6-(all-trans-polyprenyl)phenol + CO2. The protein operates within cofactor biosynthesis; ubiquinone biosynthesis. Functionally, lyase that catalyzes the C1-decarboxylation of 4-hydroxy-3-methoxy-5-(all-trans-polyprenyl)benzoic acid into 2-methoxy-6-(all-trans-polyprenyl)phenol during ubiquinone biosynthesis. The polypeptide is Ubiquinone biosynthesis protein COQ4 homolog, mitochondrial (Nematostella vectensis (Starlet sea anemone)).